Here is a 125-residue protein sequence, read N- to C-terminus: RutC family protein aq_364 (125 aa).

The protein belongs to the RutC family.

This chain is RutC family protein aq_364, found in Aquifex aeolicus (strain VF5).